The primary structure comprises 587 residues: Trans-activating transcriptional regulatory protein (587 aa).

This sequence belongs to the nucleopolyhedrovirus IE-1 protein family.

Functionally, regulatory transcriptional protein, which trans-activates gene expression from early baculovirus promoters. Can also trans-activate its own promoter, suggesting that it is autoregulated during normal infection of insect cells. In Bombyx mori nuclear polyhedrosis virus (BmNPV), this protein is Trans-activating transcriptional regulatory protein (IE1).